The chain runs to 232 residues: Phosphatidylserine decarboxylase proenzyme (232 aa).

Ser-190 acts as the Schiff-base intermediate with substrate; via pyruvic acid in catalysis. The residue at position 190 (Ser-190) is a Pyruvic acid (Ser); by autocatalysis.

This sequence belongs to the phosphatidylserine decarboxylase family. PSD-A subfamily. In terms of assembly, heterodimer of a large membrane-associated beta subunit and a small pyruvoyl-containing alpha subunit. It depends on pyruvate as a cofactor. Is synthesized initially as an inactive proenzyme. Formation of the active enzyme involves a self-maturation process in which the active site pyruvoyl group is generated from an internal serine residue via an autocatalytic post-translational modification. Two non-identical subunits are generated from the proenzyme in this reaction, and the pyruvate is formed at the N-terminus of the alpha chain, which is derived from the carboxyl end of the proenzyme. The post-translation cleavage follows an unusual pathway, termed non-hydrolytic serinolysis, in which the side chain hydroxyl group of the serine supplies its oxygen atom to form the C-terminus of the beta chain, while the remainder of the serine residue undergoes an oxidative deamination to produce ammonia and the pyruvoyl prosthetic group on the alpha chain.

It localises to the cell membrane. The enzyme catalyses a 1,2-diacyl-sn-glycero-3-phospho-L-serine + H(+) = a 1,2-diacyl-sn-glycero-3-phosphoethanolamine + CO2. The protein operates within phospholipid metabolism; phosphatidylethanolamine biosynthesis; phosphatidylethanolamine from CDP-diacylglycerol: step 2/2. Functionally, catalyzes the formation of phosphatidylethanolamine (PtdEtn) from phosphatidylserine (PtdSer). The chain is Phosphatidylserine decarboxylase proenzyme from Rhizobium etli (strain ATCC 51251 / DSM 11541 / JCM 21823 / NBRC 15573 / CFN 42).